A 175-amino-acid polypeptide reads, in one-letter code: O-acetyl-ADP-ribose deacetylase (175 aa).

The 175-residue stretch at 1 to 175 (MAVQPEVILG…IYRRLLASYP (175 aa)) folds into the Macro domain. Substrate-binding positions include 11 to 12 (DI), Asn25, 33 to 35 (GVD), and 122 to 126 (STGVY). Asp35 (proton acceptor) is an active-site residue.

This sequence belongs to the MacroD-type family. YmdB subfamily. Homodimer. Interacts with RNase III.

It carries out the reaction 3''-O-acetyl-ADP-D-ribose + H2O = ADP-D-ribose + acetate + H(+). It catalyses the reaction 2''-O-acetyl-ADP-D-ribose + H2O = ADP-D-ribose + acetate + H(+). Deacetylates O-acetyl-ADP ribose to yield ADP-ribose and free acetate. Down-regulates ribonuclease 3 (RNase III) activity. Acts by interacting directly with the region of the ribonuclease that is required for dimerization/activation. The chain is O-acetyl-ADP-ribose deacetylase from Klebsiella pneumoniae (strain 342).